We begin with the raw amino-acid sequence, 85 residues long: Elongation factor 1-beta (85 aa).

This sequence belongs to the EF-1-beta/EF-1-delta family.

Promotes the exchange of GDP for GTP in EF-1-alpha/GDP, thus allowing the regeneration of EF-1-alpha/GTP that could then be used to form the ternary complex EF-1-alpha/GTP/AAtRNA. This is Elongation factor 1-beta from Methanospirillum hungatei JF-1 (strain ATCC 27890 / DSM 864 / NBRC 100397 / JF-1).